Here is a 276-residue protein sequence, read N- to C-terminus: NADPH-dependent 7-cyano-7-deazaguanine reductase (276 aa).

A substrate-binding site is contributed by 80-82; that stretch reads IES. 82 to 83 provides a ligand contact to NADPH; the sequence is SK. Cys-178 functions as the Thioimide intermediate in the catalytic mechanism. Asp-185 acts as the Proton donor in catalysis. 217–218 contacts substrate; sequence HE. 246 to 247 provides a ligand contact to NADPH; it reads RG.

Belongs to the GTP cyclohydrolase I family. QueF type 2 subfamily. In terms of assembly, homodimer.

Its subcellular location is the cytoplasm. It carries out the reaction 7-aminomethyl-7-carbaguanine + 2 NADP(+) = 7-cyano-7-deazaguanine + 2 NADPH + 3 H(+). It functions in the pathway tRNA modification; tRNA-queuosine biosynthesis. In terms of biological role, catalyzes the NADPH-dependent reduction of 7-cyano-7-deazaguanine (preQ0) to 7-aminomethyl-7-deazaguanine (preQ1). This chain is NADPH-dependent 7-cyano-7-deazaguanine reductase, found in Teredinibacter turnerae (strain ATCC 39867 / T7901).